An 820-amino-acid polypeptide reads, in one-letter code: Trimethylamine-N-oxide reductase (820 aa).

Residues 1 to 33 constitute a signal peptide (tat-type signal); the sequence is MAITRRSFLKGVATTSAASVIGPSLLASASANA. Ser-179 is a binding site for Mo-bis(molybdopterin guanine dinucleotide).

This sequence belongs to the prokaryotic molybdopterin-containing oxidoreductase family. Mo-bis(molybdopterin guanine dinucleotide) serves as cofactor. In terms of processing, predicted to be exported by the Tat system. The position of the signal peptide cleavage has not been experimentally proven.

Its subcellular location is the periplasm. The catalysed reaction is trimethylamine + 2 Fe(III)-[cytochrome c] + H2O = trimethylamine N-oxide + 2 Fe(II)-[cytochrome c] + 3 H(+). In terms of biological role, reduces trimethylamine-N-oxide (TMAO) into trimethylamine; an anaerobic reaction coupled to energy-yielding reactions. This Vibrio parahaemolyticus serotype O3:K6 (strain RIMD 2210633) protein is Trimethylamine-N-oxide reductase (torA).